The following is a 245-amino-acid chain: Small ribosomal subunit protein uS2 (245 aa).

The segment at 226 to 245 (GGGANVGEMENPPVEATADA) is disordered.

It belongs to the universal ribosomal protein uS2 family.

In Erythrobacter litoralis (strain HTCC2594), this protein is Small ribosomal subunit protein uS2.